We begin with the raw amino-acid sequence, 438 residues long: 3-phosphoshikimate 1-carboxyvinyltransferase 1 (438 aa).

3-phosphoshikimate-binding residues include K30, S31, and R35. Residue K30 coordinates phosphoenolpyruvate. Phosphoenolpyruvate contacts are provided by G104 and R132. 3-phosphoshikimate is bound by residues S178, S179, Q180, S207, E326, and H353. Phosphoenolpyruvate is bound at residue Q180. E326 functions as the Proton acceptor in the catalytic mechanism. Residues R357, R398, and K423 each contribute to the phosphoenolpyruvate site.

This sequence belongs to the EPSP synthase family. In terms of assembly, monomer.

The protein resides in the cytoplasm. It catalyses the reaction 3-phosphoshikimate + phosphoenolpyruvate = 5-O-(1-carboxyvinyl)-3-phosphoshikimate + phosphate. Its pathway is metabolic intermediate biosynthesis; chorismate biosynthesis; chorismate from D-erythrose 4-phosphate and phosphoenolpyruvate: step 6/7. In terms of biological role, catalyzes the transfer of the enolpyruvyl moiety of phosphoenolpyruvate (PEP) to the 5-hydroxyl of shikimate-3-phosphate (S3P) to produce enolpyruvyl shikimate-3-phosphate and inorganic phosphate. The polypeptide is 3-phosphoshikimate 1-carboxyvinyltransferase 1 (Streptomyces coelicolor (strain ATCC BAA-471 / A3(2) / M145)).